Consider the following 436-residue polypeptide: Serine hydroxymethyltransferase (436 aa).

(6S)-5,6,7,8-tetrahydrofolate is bound by residues leucine 133 and 137 to 139 (GHI). An N6-(pyridoxal phosphate)lysine modification is found at lysine 242.

The protein belongs to the SHMT family. In terms of assembly, homodimer. Requires pyridoxal 5'-phosphate as cofactor.

It is found in the cytoplasm. The catalysed reaction is (6R)-5,10-methylene-5,6,7,8-tetrahydrofolate + glycine + H2O = (6S)-5,6,7,8-tetrahydrofolate + L-serine. Its pathway is one-carbon metabolism; tetrahydrofolate interconversion. It participates in amino-acid biosynthesis; glycine biosynthesis; glycine from L-serine: step 1/1. Functionally, catalyzes the reversible interconversion of serine and glycine with tetrahydrofolate (THF) serving as the one-carbon carrier. This reaction serves as the major source of one-carbon groups required for the biosynthesis of purines, thymidylate, methionine, and other important biomolecules. Also exhibits THF-independent aldolase activity toward beta-hydroxyamino acids, producing glycine and aldehydes, via a retro-aldol mechanism. This Pelagibacter ubique (strain HTCC1062) protein is Serine hydroxymethyltransferase.